The sequence spans 622 residues: Low affinity potassium transport system protein Kup (622 aa).

The next 12 helical transmembrane spans lie at 9–29 (LPAITLAAIGVVYGDIGTSPL), 49–69 (VFGFLSLIFWLLIFVVSIKYL), 103–123 (VIMGLIGGSFFYGEVVITPAI), 137–157 (PQLDTWIVPLSIIVLTLLFMI), 165–185 (VGKLFAPIMLTWFLILAGLGL), 213–233 (VSFIALGAVVLSITGGEALYA), 247–267 (WFTVVLPSLTLNYFGQGALLL), 276–296 (PFFLLAPDWALIPLLIIAALA), 337–357 (IYIPFVNWMLYVAVVIVIVSF), 363–383 (LAAAYGIAVTGTMVLTSILST), 396–416 (FVALILIAFLCVDIPLFTANL), and 419–439 (LLSGGWLPLSLGTVMFIVMTT).

Belongs to the HAK/KUP transporter (TC 2.A.72) family.

Its subcellular location is the cell inner membrane. The enzyme catalyses K(+)(in) + H(+)(in) = K(+)(out) + H(+)(out). Responsible for the low-affinity transport of potassium into the cell. Likely operates as a K(+):H(+) symporter. This is Low affinity potassium transport system protein Kup from Shigella flexneri serotype 5b (strain 8401).